We begin with the raw amino-acid sequence, 324 residues long: Succinylglutamate desuccinylase (324 aa).

The Zn(2+) site is built by histidine 53, glutamate 56, and histidine 148. Glutamate 211 is a catalytic residue.

Belongs to the AspA/AstE family. Succinylglutamate desuccinylase subfamily. Requires Zn(2+) as cofactor.

It catalyses the reaction N-succinyl-L-glutamate + H2O = L-glutamate + succinate. Its pathway is amino-acid degradation; L-arginine degradation via AST pathway; L-glutamate and succinate from L-arginine: step 5/5. Functionally, transforms N(2)-succinylglutamate into succinate and glutamate. In Acinetobacter baumannii (strain SDF), this protein is Succinylglutamate desuccinylase.